A 337-amino-acid chain; its full sequence is MRRGWKMALSGGLRCCRRVLSWVPVLVIVLVVLWSYYAYVFELCLVTVLSPAEKVIYLILYHAIFVFFAWTYWKSIFTLPQQPNQKFHLSYTDKERYKNEERPEVQKQMLVDMAKKLPVYTRTGNGAVRFCDRCHLIKPDRCHHCSVCAMCVLKMDHHCPWVNNCIGFSNYKFFLQFLAYSVLYCLYIATTVFSYFIKYWRGELPSVRSKFHVLFLLFVACMFFVSLVILFGYHCWLVSRNKTTLEAFCTPVFTSGPEKNGFNLGFIKNIQQVFGDNKKFWLIPIGSSPGDGHSFPMRSMNESQNPLLANEEPWEDNEDESQDYPEGLSSLAVESET.

Residues 1-20 (MRRGWKMALSGGLRCCRRVL) lie on the Cytoplasmic side of the membrane. A helical membrane pass occupies residues 21–41 (SWVPVLVIVLVVLWSYYAYVF). Over 42-56 (ELCLVTVLSPAEKVI) the chain is Lumenal. Residues 57-77 (YLILYHAIFVFFAWTYWKSIF) traverse the membrane as a helical segment. Topologically, residues 78–172 (TLPQQPNQKF…NNCIGFSNYK (95 aa)) are cytoplasmic. Residues 129–179 (RFCDRCHLIKPDRCHHCSVCAMCVLKMDHHCPWVNNCIGFSNYKFFLQFLA) enclose the DHHC domain. Residues Cys131, Cys134, His144, Cys145, Cys148, Cys151, and His158 each contribute to the Zn(2+) site. Cys159 functions as the S-palmitoyl cysteine intermediate in the catalytic mechanism. Position 165 (Cys165) interacts with Zn(2+). The helical transmembrane segment at 173 to 193 (FFLQFLAYSVLYCLYIATTVF) threads the bilayer. Residues 194 to 210 (SYFIKYWRGELPSVRSK) lie on the Lumenal side of the membrane. Residues 211-234 (FHVLFLLFVACMFFVSLVILFGYH) traverse the membrane as a helical segment. The Cytoplasmic segment spans residues 235–337 (CWLVSRNKTT…LSSLAVESET (103 aa)). The segment at 293-337 (HSFPMRSMNESQNPLLANEEPWEDNEDESQDYPEGLSSLAVESET) is disordered. Positions 312–323 (EPWEDNEDESQD) are enriched in acidic residues.

The protein belongs to the DHHC palmitoyltransferase family. Autopalmitoylated (in vitro). In brain, expressed in both excitatory and inhibitory neurons but not expressed by glial cells.

The protein localises to the golgi apparatus membrane. The protein resides in the postsynaptic density. The enzyme catalyses L-cysteinyl-[protein] + hexadecanoyl-CoA = S-hexadecanoyl-L-cysteinyl-[protein] + CoA. It catalyses the reaction L-cysteinyl-[protein] + tetradecanoyl-CoA = S-tetradecanoyl-L-cysteinyl-[protein] + CoA. The catalysed reaction is L-cysteinyl-[protein] + octadecanoyl-CoA = S-octadecanoyl-L-cysteinyl-[protein] + CoA. Its function is as follows. Palmitoyltransferase that catalyzes the addition of palmitate onto various protein substrates. Has no stringent fatty acid selectivity and in addition to palmitate can also transfer onto target proteins myristate from tetradecanoyl-CoA and stearate from octadecanoyl-CoA. Palmitoylates IGF2R and SORT1, promoting their partitioning to an endosomal membrane subdomain where they can interact with the retromer cargo-selective complex. Thereby, regulates retrograde transport from endosomes to the Golgi apparatus of these lysosomal sorting receptors and plays a role in trafficking of lysosomal proteins. In the nervous system, catalyzes the palmitoylation of DLG4/PSD95 and regulates its synaptic clustering and function in synaptogenesis. Could be involved in the differentiation of dopaminergic neurons and the development of the diencephalon. Could also catalyze the palmitoylation of GAP43. Could also palmitoylate DNAJC5 and regulate its localization to the Golgi membrane. Could also palmitoylate FYN as shown in vitro. May palmitoylate CALHM3 subunit of gustatory voltage-gated ion channels and modulate channel gating and kinetics. The sequence is that of Palmitoyltransferase ZDHHC15 from Rattus norvegicus (Rat).